The sequence spans 1046 residues: Nuclear pore complex protein NUP96 (1046 aa).

A Peptidase S59 domain is found at 51 to 187; the sequence is SPDYFLKPCI…GLWKFFVPHF (137 aa). A compositionally biased stretch (polar residues) spans 283 to 295; the sequence is RNVRPSQKIAQRN. Residues 283 to 304 are disordered; it reads RNVRPSQKIAQRNSHQDPPPVV. Serine 523 is modified (phosphoserine).

In terms of assembly, part of the nuclear pore complex (NPC). The NPC has an eight-fold symmetrical structure comprising a central transport channel and two rings, the cytoplasmic and nuclear rings, to which eight filaments are attached. The cytoplasmic filaments have loose ends, while the nuclear filaments are joined in a distal ring, forming a nuclear basket. NPCs are highly dynamic in configuration and composition, and can be devided in 3 subcomplexes, the NUP62 subcomplex, the NUP107-160 subcomplex and the NUP93 subcomplex, containing approximately 30 different nucleoporin proteins. As to expression, expressed in roots, leaves, stems, flowers and siliques.

The protein resides in the nucleus membrane. It is found in the nucleus. It localises to the nuclear pore complex. In terms of biological role, contributes to the transfer of mature mRNA from the nucleus to the cytosol. Required for both R gene-mediated and basal disease resistance. RNA export seems to play a critical role in stress responses and regulation of plant growth and development. This Arabidopsis thaliana (Mouse-ear cress) protein is Nuclear pore complex protein NUP96.